A 1073-amino-acid chain; its full sequence is Probable cellulose synthase A catalytic subunit 2 [UDP-forming] (1073 aa).

At 1–270 (MDGAKSGKQC…SSSRINPYRM (270 aa)) the chain is on the cytoplasmic side. Positions 13, 16, 32, 35, 40, 43, 55, and 58 each coordinate Zn(2+). The RING-type; degenerate zinc finger occupies 13 to 59 (CQICGDGVGTAADGELFTACDVCGFPVCRPCYEYERKDGSQACPQCK). A disordered region spans residues 66–98 (KGSPPILGDESDDVDADDASDVNYPTSGNQDHK). A compositionally biased stretch (acidic residues) spans 74 to 85 (DESDDVDADDAS). The chain crosses the membrane as a helical span at residues 271-291 (VIVLRLIVLCIFLHYRITNPV). Residues 292–293 (RN) are Extracellular-facing. A helical membrane pass occupies residues 294-314 (AYPLWLLSVICEIWFALSWIL). Residues 315 to 856 (DQFPKWSPIN…INTTIYPLTS (542 aa)) are Cytoplasmic-facing. Serine 353, lysine 359, glutamate 360, and aspartate 389 together coordinate UDP-alpha-D-glucose. Aspartate 389 is a catalytic residue. The stretch at 443–470 (VKDRRAMKREYEEFKVRVNALVAKAQKV) forms a coiled coil. Lysine 530 is a binding site for UDP-alpha-D-glucose. The Mn(2+) site is built by lysine 531 and aspartate 555. Positions 655–676 (GGRKKTKKSKEKSTEKKKSHKH) are disordered. The active site involves aspartate 773. A helical membrane pass occupies residues 857 to 877 (IPLLLYCILPAICLLTGKFII). At 878-882 (PEISN) the chain is on the extracellular side. Residues 883 to 903 (FASIWFISLFLSIFATGILEM) form a helical membrane-spanning segment. The Cytoplasmic portion of the chain corresponds to 904–918 (RWSGVGIDEWWRNEQ). Residues 919–939 (FWVIGGISAHLFAVFQGLLKV) form a helical membrane-spanning segment. Residues 940 to 969 (LAGIDTSFTVTSKASDEEGDFAELYMFKWT) lie on the Extracellular side of the membrane. A helical membrane pass occupies residues 970–990 (TLLIPPTTILIINLVGVVAGI). Residues 991 to 1001 (SYAINSGYQSW) lie on the Cytoplasmic side of the membrane. A helical membrane pass occupies residues 1002–1022 (GPLFGKLFFAFWVIVHLYPFL). Residues 1023-1031 (KGLMGRQNR) are Extracellular-facing. Residues 1032–1052 (TPTIVVVWAILLASIFSLLWV) traverse the membrane as a helical segment. The Cytoplasmic segment spans residues 1053-1073 (RIDPFTTRVTGPDTQKCGINC).

It belongs to the glycosyltransferase 2 family. Plant cellulose synthase subfamily. Mn(2+) serves as cofactor. The cofactor is Zn(2+).

Its subcellular location is the cell membrane. The enzyme catalyses [(1-&gt;4)-beta-D-glucosyl](n) + UDP-alpha-D-glucose = [(1-&gt;4)-beta-D-glucosyl](n+1) + UDP + H(+). The protein operates within glycan metabolism; plant cellulose biosynthesis. Probable catalytic subunit of cellulose synthase terminal complexes ('rosettes'), required for beta-1,4-glucan microfibril crystallization, a major mechanism of the cell wall formation. The sequence is that of Probable cellulose synthase A catalytic subunit 2 [UDP-forming] (CESA2) from Oryza sativa subsp. japonica (Rice).